Here is a 390-residue protein sequence, read N- to C-terminus: Cell adhesion molecule 4 (390 aa).

Residues 1–27 form the signal peptide; it reads MAPALTALNRCFVLGILLLVTAGTAFS. Positions 28–122 constitute an Ig-like V-type domain; that stretch reads QEVQAENVTV…DTHHQIATLT (95 aa). Over 28 to 326 the chain is Extracellular; the sequence is QEVQAENVTV…IEAQTQVPYA (299 aa). 2 N-linked (GlcNAc...) asparagine glycosylation sites follow: Asn34 and Asn70. Disulfide bonds link Cys47–Cys107, Cys148–Cys202, and Cys247–Cys293. Ig-like C2-type domains follow at residues 127–219 and 226–309; these read PDNP…TQYE and PTAS…YVLV. N-linked (GlcNAc...) asparagine glycosylation is found at Asn264 and Asn288. Residues 327–347 form a helical membrane-spanning segment; that stretch reads VIGGILALLVFLVICILIVMV. Residues 348–390 are Cytoplasmic-facing; sequence WCSVRQKGSYLTHEASGLDEHGEAREAFLNGGENHKRKEEFFI.

Belongs to the nectin family.

Its subcellular location is the membrane. Its function is as follows. Involved in the cell-cell adhesion. The sequence is that of Cell adhesion molecule 4 (cadm4) from Xenopus laevis (African clawed frog).